The following is a 268-amino-acid chain: UPF0328 protein ECU05_1640/ECU11_0090 (268 aa).

The protein belongs to the UPF0328 family.

The protein is UPF0328 protein ECU05_1640/ECU11_0090 of Encephalitozoon cuniculi (strain GB-M1) (Microsporidian parasite).